A 240-amino-acid chain; its full sequence is MQYKLILLVVGLFQASLAYPYADGESVPHPSKDVAPPDTQDSSTQTEVTTQKGWIKQGVETITGMIKGQADIAKDAVGIAGTGTHMGAKITSAAGELGTGIGNAALQGGLQIGAMGVEAGANLAHQGIGLVDKWGQILPGFLGKGVQSVANLAGNIVDKAENIGKGVLEKVGAAGDKGFKWVDSKIKDTANSVDTTVNHITGKIQEGIDKGANTLTGGIDNTLGKLKDIVNNIRPKPVTA.

Positions 1 to 18 (MQYKLILLVVGLFQASLA) are cleaved as a signal peptide. Residues 25 to 50 (ESVPHPSKDVAPPDTQDSSTQTEVTT) form a disordered region. Polar residues predominate over residues 39-50 (TQDSSTQTEVTT).

Expressed by the venom gland (anterior main gland) (at protein level).

It is found in the secreted. This Platymeris rhadamanthus (Red spot assassin bug) protein is Venom hemolysin-like protein 1.